The following is a 92-amino-acid chain: uncharacterized protein (92 aa).

The signal sequence occupies residues 1-23; that stretch reads MNPAIVVIIVLLVAALLIWACKA.

This is an uncharacterized protein from Acheta domesticus (House cricket).